Consider the following 226-residue polypeptide: UPF0758 protein GTNG_2548 (226 aa).

An MPN domain is found at 104–226 (VIRCPEDGAK…FISLKEKGYV (123 aa)). Positions 175, 177, and 188 each coordinate Zn(2+). Residues 175 to 188 (HNHPSGDPTPSRED) carry the JAMM motif motif.

It belongs to the UPF0758 family.

The chain is UPF0758 protein GTNG_2548 from Geobacillus thermodenitrificans (strain NG80-2).